The following is a 101-amino-acid chain: Urease subunit beta (101 aa).

Belongs to the urease beta subunit family. Heterotrimer of UreA (gamma), UreB (beta) and UreC (alpha) subunits. Three heterotrimers associate to form the active enzyme.

The protein resides in the cytoplasm. It catalyses the reaction urea + 2 H2O + H(+) = hydrogencarbonate + 2 NH4(+). The protein operates within nitrogen metabolism; urea degradation; CO(2) and NH(3) from urea (urease route): step 1/1. This is Urease subunit beta from Thermosynechococcus vestitus (strain NIES-2133 / IAM M-273 / BP-1).